Consider the following 164-residue polypeptide: Phosphopantetheine adenylyltransferase (164 aa).

Thr-10 is a binding site for substrate. Residues 10–11 and His-18 each bind ATP; that span reads TF. Substrate-binding residues include Lys-42, Leu-74, and Arg-88. ATP contacts are provided by residues 89-91, Glu-99, and 124-130; these read GIR and NSFISST.

Belongs to the bacterial CoaD family. In terms of assembly, homohexamer. It depends on Mg(2+) as a cofactor.

It is found in the cytoplasm. The catalysed reaction is (R)-4'-phosphopantetheine + ATP + H(+) = 3'-dephospho-CoA + diphosphate. It functions in the pathway cofactor biosynthesis; coenzyme A biosynthesis; CoA from (R)-pantothenate: step 4/5. Functionally, reversibly transfers an adenylyl group from ATP to 4'-phosphopantetheine, yielding dephospho-CoA (dPCoA) and pyrophosphate. The polypeptide is Phosphopantetheine adenylyltransferase (Pseudoalteromonas translucida (strain TAC 125)).